Reading from the N-terminus, the 271-residue chain is Shikimate dehydrogenase-like protein HI_0607 (271 aa).

The active-site Proton donor/acceptor is the K67. Residue D103 participates in substrate binding. NADP(+) is bound by residues 126–130, K154, and S184; that span reads GSGGM.

It belongs to the shikimate dehydrogenase-like family. Homodimer.

It catalyses the reaction shikimate + NADP(+) = 3-dehydroshikimate + NADPH + H(+). In terms of biological role, in vitro, is able to catalyze the NADP(+)-dependent oxidation of shikimate to 3-dehydroshikimate. However, has much lower activity than classical shikimate dehydrogenases AroE, indicating that shikimate may not be the biological substrate. Cannot utilize NAD(+) instead of NADP(+). Is not able to catalyze the oxidation of quinate. This chain is Shikimate dehydrogenase-like protein HI_0607, found in Haemophilus influenzae (strain ATCC 51907 / DSM 11121 / KW20 / Rd).